We begin with the raw amino-acid sequence, 178 residues long: Ribulose bisphosphate carboxylase small subunit, chloroplastic (178 aa).

The N-terminal 55 residues, 1-55 (MASSMMVSTAAVSRTSPAQSNMVVPFAGLHSSAAFPVTRKFADSSKLPSNGLRVR), are a transit peptide targeting the chloroplast.

Belongs to the RuBisCO small chain family. Heterohexadecamer of 8 large and 8 small subunits.

It localises to the plastid. The protein resides in the chloroplast. Functionally, ruBisCO catalyzes two reactions: the carboxylation of D-ribulose 1,5-bisphosphate, the primary event in carbon dioxide fixation, as well as the oxidative fragmentation of the pentose substrate. Both reactions occur simultaneously and in competition at the same active site. Although the small subunit is not catalytic it is essential for maximal activity. This Zantedeschia aethiopica (White calla lily) protein is Ribulose bisphosphate carboxylase small subunit, chloroplastic.